The chain runs to 221 residues: MNYLCLVVTLVAVAGAISGEKFSDDNTGYQSTPSLRIRTTPGRRRQTPRTIGPPYTRRTLRTTTDYSTTVENGNLTTPAANSTEKGNGLYGLRRQTPRTIGPPYTRRTLRTTTGYWTTVEKGNGTTPAANSTEKGNRPYGRRRQTPRTIGPPYTRRTTTDYWAAVEKGYLTTPAANSTEKESRPNATQRREISWTFGPLYTWRTTKGYGTTLETTNATSTS.

An N-terminal signal peptide occupies residues 1-19 (MNYLCLVVTLVAVAGAISG). A propeptide spanning residues 20-45 (EKFSDDNTGYQSTPSLRIRTTPGRRR) is cleaved from the precursor. A disordered region spans residues 21–155 (KFSDDNTGYQ…PRTIGPPYTR (135 aa)). Residues 25-34 (DNTGYQSTPS) are compositionally biased toward polar residues. The segment covering 48-69 (PRTIGPPYTRRTLRTTTDYSTT) has biased composition (low complexity). Composition is skewed to polar residues over residues 70–85 (VENG…STEK) and 123–133 (NGTTPAANSTE). Residues 191–221 (EISWTFGPLYTWRTTKGYGTTLETTNATSTS) constitute a propeptide that is removed on maturation.

As to expression, salivary glands.

Its subcellular location is the secreted. Its function is as follows. Suppress host inflammatory response. Exerts significant anti-inflammatory functions, either by directly inhibiting host secretion of inflammatory factors such as tumor necrosis factor-alpha (TNF), monocyte chemotactic protein-1 (CCL2), and interferon-gamma (IFNG) or by indirectly increasing the secretion of immunosuppressant cytokine of interleukin-10 (IL10). Also potently scavenges free radical in vitro in a rapid manner. All tested concentrations of this peptide have little effect on the cell viability. In vivo, inhibits hind paw adjuvant-induced inflammation in mouse in a dose-dependent manner. In terms of biological role, suppress host inflammatory response. Exerts significant anti-inflammatory functions, either by directly inhibiting host secretion of inflammatory factors such as tumor necrosis factor-alpha (TNF), monocyte chemotactic protein-1 (CCL2), and interferon-gamma (IFNG) or by indirectly increasing the secretion of immunosuppressant cytokine of interleukin-10 (IL10). Also potently scavenges free radical in vitro in a rapid manner. Low concentrations of this peptide have little effect on the cell viability, whereas high concentrations increase the cell viability by 10-20%. In vivo, inhibits hind paw adjuvant-induced inflammation in mouse in a dose-dependent manner. Not studied but probably similar to Hyalomin-B1. This chain is Immunoregulatory peptides, found in Hyalomma asiaticum asiaticum (Tick).